A 701-amino-acid polypeptide reads, in one-letter code: Elongation factor G (701 aa).

One can recognise a tr-type G domain in the interval 8–291 (GRYRNIGIVA…AVIDYLPAPT (284 aa)). GTP contacts are provided by residues 17-24 (AHVDAGKT), 89-93 (DTPGH), and 143-146 (NKMD).

It belongs to the TRAFAC class translation factor GTPase superfamily. Classic translation factor GTPase family. EF-G/EF-2 subfamily.

The protein localises to the cytoplasm. Catalyzes the GTP-dependent ribosomal translocation step during translation elongation. During this step, the ribosome changes from the pre-translocational (PRE) to the post-translocational (POST) state as the newly formed A-site-bound peptidyl-tRNA and P-site-bound deacylated tRNA move to the P and E sites, respectively. Catalyzes the coordinated movement of the two tRNA molecules, the mRNA and conformational changes in the ribosome. This chain is Elongation factor G, found in Pseudomonas savastanoi pv. phaseolicola (strain 1448A / Race 6) (Pseudomonas syringae pv. phaseolicola (strain 1448A / Race 6)).